The chain runs to 257 residues: MTDLKLAAQRALNLMDLTTLNDDDTDQKVIDLCRKAKSPAGLTAAVCIYPRFIPIARKTLREIGAADVRIATVTNFPHGNDDIEIAVAETRAAVAYGADEVDVVFPYRAFMAGNEQVGFDLVKACKEACGSQALLKVIIETGELKEEALIRRASEISIDAGADFIKTSTGKVPVNATPEAARIMMEVIKAKNPKVGFKPAGGVKDAAVAGQYLAMAEEILGKDWVSARTFRFGASSLLASLLATLGHGDKPANTSGY.

Asp102 acts as the Proton donor/acceptor in catalysis. Lys166 serves as the catalytic Schiff-base intermediate with acetaldehyde. Residue Lys198 is the Proton donor/acceptor of the active site.

This sequence belongs to the DeoC/FbaB aldolase family. DeoC type 2 subfamily.

The protein resides in the cytoplasm. The catalysed reaction is 2-deoxy-D-ribose 5-phosphate = D-glyceraldehyde 3-phosphate + acetaldehyde. It functions in the pathway carbohydrate degradation; 2-deoxy-D-ribose 1-phosphate degradation; D-glyceraldehyde 3-phosphate and acetaldehyde from 2-deoxy-alpha-D-ribose 1-phosphate: step 2/2. Functionally, catalyzes a reversible aldol reaction between acetaldehyde and D-glyceraldehyde 3-phosphate to generate 2-deoxy-D-ribose 5-phosphate. The polypeptide is Deoxyribose-phosphate aldolase (Aeromonas hydrophila subsp. hydrophila (strain ATCC 7966 / DSM 30187 / BCRC 13018 / CCUG 14551 / JCM 1027 / KCTC 2358 / NCIMB 9240 / NCTC 8049)).